Consider the following 97-residue polypeptide: Large ribosomal subunit protein eL21 (97 aa).

Residues 1-23 are disordered; sequence MTKMSKGPRSGSRRVMTKSVKNK.

The protein belongs to the eukaryotic ribosomal protein eL21 family.

The sequence is that of Large ribosomal subunit protein eL21 from Picrophilus torridus (strain ATCC 700027 / DSM 9790 / JCM 10055 / NBRC 100828 / KAW 2/3).